We begin with the raw amino-acid sequence, 29 residues long: Kappa-sparatoxin-Hv1e (29 aa).

3 cysteine pairs are disulfide-bonded: Cys3-Cys17, Cys10-Cys22, and Cys16-Cys26.

As to expression, expressed by the venom gland.

It localises to the secreted. Its function is as follows. Inhibitor of voltage-gated potassium channels of the Kv4/KCND family. Blocks calcium channels (Cav). The chain is Kappa-sparatoxin-Hv1e from Heteropoda venatoria (Brown huntsman spider).